The primary structure comprises 513 residues: Cytochrome P450 monooxygenase asaD (513 aa).

Residues 14-34 (ILYPFLFGIFAVASLCIATLL) traverse the membrane as a helical segment. N-linked (GlcNAc...) asparagine glycans are attached at residues asparagine 258, asparagine 370, asparagine 431, and asparagine 441. Cysteine 461 is a heme binding site.

Belongs to the cytochrome P450 family. Heme serves as cofactor.

It is found in the membrane. It participates in secondary metabolite biosynthesis. Its function is as follows. Cytochrome P450 monooxygenase; part of the gene cluster that mediates the biosynthesis of aspergillic acid, a hydroxamic acid-containing pyrazinone with aliphatic side chains that originates from leucine (Leu) and isoleucine (Ile). Aspergillic acid has antibiotic properties and was shown to be lethal to mice. The first step in the pathway is the production of deoxyaspergillic acid via a condensation between the Ile amine and the Leu carboxylic acid, followed by a reductive release from the protein forming the dipeptide aldehyde NH(2)-Leu-Ile-CHO, which could undergo an intermolecular cyclization resulting in a dihydropyrazinone. As the NRPS asaC lacks a condensation domain, it is improbable that it is responsible for condensation of Leu and Ile. One possibility is that asaC acts on a previously condensed dipeptide and functions as a Leu-Ile reductase to yield deoxyaspergillic acid. After asaC forms deoxyaspergillic acid, the cytochrome P450 asaD oxidizes the pyrazinone to the hydroxamic acid-containing bioactive metabolite aspergillic acid. The hydroxylase/desaturase asaB can then convert aspergillic acid to hydroxyaspergillic acid. Both aspergillic acid and hydroxyaspergillic acid can form complexes with iron producing ferriaspergillin analogs. The polypeptide is Cytochrome P450 monooxygenase asaD (Aspergillus flavus (strain ATCC 200026 / FGSC A1120 / IAM 13836 / NRRL 3357 / JCM 12722 / SRRC 167)).